The chain runs to 881 residues: Alanine--tRNA ligase (881 aa).

His566, His570, Cys668, and His672 together coordinate Zn(2+).

It belongs to the class-II aminoacyl-tRNA synthetase family. The cofactor is Zn(2+).

It localises to the cytoplasm. The catalysed reaction is tRNA(Ala) + L-alanine + ATP = L-alanyl-tRNA(Ala) + AMP + diphosphate. In terms of biological role, catalyzes the attachment of alanine to tRNA(Ala) in a two-step reaction: alanine is first activated by ATP to form Ala-AMP and then transferred to the acceptor end of tRNA(Ala). Also edits incorrectly charged Ser-tRNA(Ala) and Gly-tRNA(Ala) via its editing domain. In Frankia alni (strain DSM 45986 / CECT 9034 / ACN14a), this protein is Alanine--tRNA ligase.